The chain runs to 204 residues: Rho GDP-dissociation inhibitor 1 (204 aa).

The interval 1-36 is disordered; sequence MAEQEPTAEQLAQIAAENEEDEHSVNYKPPAQKSIQ. The residue at position 2 (A2) is an N-acetylalanine. At S34 the chain carries Phosphoserine. K43 carries the N6-acetyllysine modification. S47 carries the post-translational modification Phosphoserine. N6-acetyllysine occurs at positions 105 and 127. Glycyl lysine isopeptide (Lys-Gly) (interchain with G-Cter in SUMO1); alternate cross-links involve residues K138 and K141. Residues K138 and K141 each participate in a glycyl lysine isopeptide (Lys-Gly) (interchain with G-Cter in SUMO2); alternate cross-link. K141 carries the N6-acetyllysine; alternate modification. K141 carries the post-translational modification N6-succinyllysine; alternate. At K178 the chain carries N6-acetyllysine.

Belongs to the Rho GDI family. In terms of assembly, monomer. Interacts with FER. Interacts with PLXNB3. Forms a heterodimer with RAC1. Interacts with RHOA, the affinity is increased by three orders of magnitude when RHOA is prenylated. Interacts with PSMD10; the interaction increases ARHGDIA association with RHOA, leading to ARHGDIA-mediated inactivation of RHOA and ROCK and prolonged AKT activation. Interacts with KANK2; the interaction is direct and may regulate the interaction of ARHGDIA with RHOA, RAC1 and CDC42. Interacts with RHOC. Interacts with CDC42. Interacts with NGFR (via death domain); NGFR binding decreases the affinity for RHOA.

It is found in the cytoplasm. Its function is as follows. Controls Rho proteins homeostasis. Regulates the GDP/GTP exchange reaction of the Rho proteins by inhibiting the dissociation of GDP from them, and the subsequent binding of GTP to them. Retains Rho proteins such as CDC42, RAC1 and RHOA in an inactive cytosolic pool, regulating their stability and protecting them from degradation. Actively involved in the recycling and distribution of activated Rho GTPases in the cell, mediates extraction from membranes of both inactive and activated molecules due its exceptionally high affinity for prenylated forms. Through the modulation of Rho proteins, may play a role in cell motility regulation. In glioma cells, inhibits cell migration and invasion by mediating the signals of SEMA5A and PLXNB3 that lead to inactivation of RAC1. In Homo sapiens (Human), this protein is Rho GDP-dissociation inhibitor 1 (ARHGDIA).